The following is a 293-amino-acid chain: MATSTSSSLSLSFFSSSLFSSKSRNFSSKPILKLPSSSHSQTSLSLSIKSELIPLPILNFSGEKVGETFLNLKTAPPEKARAVVHRGLITHLQNKRRGTASTLTRAEVRGGGRKPYPQKKTGRARRGSQGSPLRPGGGVIFGPKPRDWTIKMNKKERRLALSTAIASAVGNSFVVEEFAENFEKPKTKDFIAAMQRWGLDPAEKSLFFLMDLVENVEKSGRNIRTLKLLTPRSLNLFDVLNAEKLVFTEGTIQYLNQRYGVDTLEDEDEEEEEEEEGEEVDDGVEDGTPEPAE.

Residues 1-50 (MATSTSSSLSLSFFSSSLFSSKSRNFSSKPILKLPSSSHSQTSLSLSIKS) constitute a chloroplast transit peptide. 2 disordered regions span residues 107-138 (EVRGGGRKPYPQKKTGRARRGSQGSPLRPGGG) and 259-293 (YGVDTLEDEDEEEEEEEEGEEVDDGVEDGTPEPAE). Residues 116–126 (YPQKKTGRARR) are compositionally biased toward basic residues. The span at 263–293 (TLEDEDEEEEEEEEGEEVDDGVEDGTPEPAE) shows a compositional bias: acidic residues.

The protein belongs to the universal ribosomal protein uL4 family. As to quaternary structure, component of the chloroplast large ribosomal subunit (LSU). Mature 70S chloroplast ribosomes of higher plants consist of a small (30S) and a large (50S) subunit. The 30S small subunit contains 1 molecule of ribosomal RNA (16S rRNA) and 24 different proteins. The 50S large subunit contains 3 rRNA molecules (23S, 5S and 4.5S rRNA) and 33 different proteins. In terms of tissue distribution, highly expressed in cotyledon and weakly in roots.

The protein resides in the plastid. Its subcellular location is the chloroplast. In terms of biological role, component of the chloroplast ribosome (chloro-ribosome), a dedicated translation machinery responsible for the synthesis of chloroplast genome-encoded proteins, including proteins of the transcription and translation machinery and components of the photosynthetic apparatus. In Spinacia oleracea (Spinach), this protein is Large ribosomal subunit protein uL4c (RPL4).